The primary structure comprises 179 residues: Sec-independent protein translocase protein TatB (179 aa).

A helical membrane pass occupies residues 1–21; the sequence is MFDLGFWEVLIIMLIGLLILG. Composition is skewed to basic and acidic residues over residues 75 to 86 and 94 to 106; these read KDVEKNARRFEA and TFRDVGRQADDAA. The segment at 75 to 179 is disordered; the sequence is KDVEKNARRF…QGGGGEEKRQ (105 aa).

The protein belongs to the TatB family. The Tat system comprises two distinct complexes: a TatABC complex, containing multiple copies of TatA, TatB and TatC subunits, and a separate TatA complex, containing only TatA subunits. Substrates initially bind to the TatABC complex, which probably triggers association of the separate TatA complex to form the active translocon.

It localises to the cell inner membrane. Its function is as follows. Part of the twin-arginine translocation (Tat) system that transports large folded proteins containing a characteristic twin-arginine motif in their signal peptide across membranes. Together with TatC, TatB is part of a receptor directly interacting with Tat signal peptides. TatB may form an oligomeric binding site that transiently accommodates folded Tat precursor proteins before their translocation. The chain is Sec-independent protein translocase protein TatB from Alkalilimnicola ehrlichii (strain ATCC BAA-1101 / DSM 17681 / MLHE-1).